A 76-amino-acid chain; its full sequence is Bowman-Birk type proteinase inhibitor DE-4 (76 aa).

7 disulfide bridges follow: cysteine 15–cysteine 69, cysteine 16–cysteine 31, cysteine 19–cysteine 65, cysteine 21–cysteine 29, cysteine 39–cysteine 46, cysteine 43–cysteine 58, and cysteine 48–cysteine 56.

It belongs to the Bowman-Birk serine protease inhibitor family.

The protein is Bowman-Birk type proteinase inhibitor DE-4 of Macrotyloma axillare (Perennial horse gram).